A 265-amino-acid polypeptide reads, in one-letter code: Mlc titration factor A (265 aa).

The Zn(2+) site is built by histidine 111, histidine 148, histidine 152, and glutamate 211.

Belongs to the MtfA family. As to quaternary structure, interacts with Mlc. Requires Zn(2+) as cofactor.

It localises to the cytoplasm. Its function is as follows. Involved in the modulation of the activity of the glucose-phosphotransferase system (glucose-PTS). Interacts with the transcriptional repressor Mlc, preventing its interaction with DNA and leading to the modulation of expression of genes regulated by Mlc, including ptsG, which encodes the PTS system glucose-specific EIICB component. In terms of biological role, shows zinc-dependent metallopeptidase activity. This Escherichia coli (strain 55989 / EAEC) protein is Mlc titration factor A.